The following is a 332-amino-acid chain: UDP-N-acetylenolpyruvoylglucosamine reductase (332 aa).

One can recognise an FAD-binding PCMH-type domain in the interval 15–184 (IDVSAACFLE…TYVSFRLSKR (170 aa)). Arg160 is a catalytic residue. The active-site Proton donor is Ser232. Glu328 is a catalytic residue.

Belongs to the MurB family. FAD is required as a cofactor.

It localises to the cytoplasm. It catalyses the reaction UDP-N-acetyl-alpha-D-muramate + NADP(+) = UDP-N-acetyl-3-O-(1-carboxyvinyl)-alpha-D-glucosamine + NADPH + H(+). Its pathway is cell wall biogenesis; peptidoglycan biosynthesis. Cell wall formation. The protein is UDP-N-acetylenolpyruvoylglucosamine reductase of Bacteroides fragilis (strain ATCC 25285 / DSM 2151 / CCUG 4856 / JCM 11019 / LMG 10263 / NCTC 9343 / Onslow / VPI 2553 / EN-2).